The sequence spans 548 residues: Eukaryotic translation initiation factor 3 subunit D (548 aa).

Residue K53 is modified to N6-acetyllysine. Position 161 is a phosphoserine (S161). The RNA gate stretch occupies residues 285-299 (DFDLLTVSETANEPP). Positions 523-548 (PDGTFSSDEDEEEEEEEEEEEEEEET) are disordered. A phosphoserine mark is found at S528 and S529. Residues 529–548 (SDEDEEEEEEEEEEEEEEET) show a composition bias toward acidic residues.

It belongs to the eIF-3 subunit D family. As to quaternary structure, component of the eukaryotic translation initiation factor 3 (eIF-3) complex, which is composed of 13 subunits: EIF3A, EIF3B, EIF3C, EIF3D, EIF3E, EIF3F, EIF3G, EIF3H, EIF3I, EIF3J, EIF3K, EIF3L and EIF3M. The eIF-3 complex appears to include 3 stable modules: module A is composed of EIF3A, EIF3B, EIF3G and EIF3I; module B is composed of EIF3F, EIF3H, and EIF3M; and module C is composed of EIF3C, EIF3D, EIF3E, EIF3K and EIF3L. EIF3C of module C binds EIF3B of module A and EIF3H of module B, thereby linking the three modules. EIF3J is a labile subunit that binds to the eIF-3 complex via EIF3B. The eIF-3 complex interacts with RPS6KB1 under conditions of nutrient depletion. Mitogenic stimulation leads to binding and activation of a complex composed of MTOR and RPTOR, leading to phosphorylation and release of RPS6KB1 and binding of EIF4B to eIF-3.

The protein resides in the cytoplasm. In terms of biological role, mRNA cap-binding component of the eukaryotic translation initiation factor 3 (eIF-3) complex, a complex required for several steps in the initiation of protein synthesis of a specialized repertoire of mRNAs. The eIF-3 complex associates with the 40S ribosome and facilitates the recruitment of eIF-1, eIF-1A, eIF-2:GTP:methionyl-tRNAi and eIF-5 to form the 43S pre-initiation complex (43S PIC). The eIF-3 complex stimulates mRNA recruitment to the 43S PIC and scanning of the mRNA for AUG recognition. The eIF-3 complex is also required for disassembly and recycling of post-termination ribosomal complexes and subsequently prevents premature joining of the 40S and 60S ribosomal subunits prior to initiation. The eIF-3 complex specifically targets and initiates translation of a subset of mRNAs involved in cell proliferation, including cell cycling, differentiation and apoptosis, and uses different modes of RNA stem-loop binding to exert either translational activation or repression. In the eIF-3 complex, EIF3D specifically recognizes and binds the 7-methylguanosine cap of a subset of mRNAs. The sequence is that of Eukaryotic translation initiation factor 3 subunit D from Macaca fascicularis (Crab-eating macaque).